The sequence spans 309 residues: UDP-3-O-acyl-N-acetylglucosamine deacetylase (309 aa).

Zn(2+) is bound by residues His-78, His-237, and Asp-241. His-264 functions as the Proton donor in the catalytic mechanism.

This sequence belongs to the LpxC family. Zn(2+) serves as cofactor.

It catalyses the reaction a UDP-3-O-[(3R)-3-hydroxyacyl]-N-acetyl-alpha-D-glucosamine + H2O = a UDP-3-O-[(3R)-3-hydroxyacyl]-alpha-D-glucosamine + acetate. It participates in glycolipid biosynthesis; lipid IV(A) biosynthesis; lipid IV(A) from (3R)-3-hydroxytetradecanoyl-[acyl-carrier-protein] and UDP-N-acetyl-alpha-D-glucosamine: step 2/6. Catalyzes the hydrolysis of UDP-3-O-myristoyl-N-acetylglucosamine to form UDP-3-O-myristoylglucosamine and acetate, the committed step in lipid A biosynthesis. The sequence is that of UDP-3-O-acyl-N-acetylglucosamine deacetylase from Methylobacillus flagellatus (strain ATCC 51484 / DSM 6875 / VKM B-1610 / KT).